The chain runs to 79 residues: Sulfur carrier protein TusA (79 aa).

The active-site Cysteine persulfide intermediate is Cys17.

This sequence belongs to the sulfur carrier protein TusA family.

It localises to the cytoplasm. Functionally, sulfur carrier protein which probably makes part of a sulfur-relay system. The chain is Sulfur carrier protein TusA from Histophilus somni (strain 129Pt) (Haemophilus somnus).